Consider the following 385-residue polypeptide: Deoxyguanosinetriphosphate triphosphohydrolase-like protein (385 aa).

Positions 62 to 197 (RLTHSLEVAQ…VSLADDIAYS (136 aa)) constitute an HD domain.

This sequence belongs to the dGTPase family. Type 2 subfamily.

The polypeptide is Deoxyguanosinetriphosphate triphosphohydrolase-like protein (Neorickettsia sennetsu (strain ATCC VR-367 / Miyayama) (Ehrlichia sennetsu)).